The sequence spans 571 residues: Ferroportin (571 aa).

Over 1–23 (MTRAGDHNRQRGCCGSLADYLTS) the chain is Cytoplasmic. A helical transmembrane segment spans residues 24–53 (AKFLLYLGHSLSTWGDRMWHFAVSVFLVEL). Fe cation-binding residues include aspartate 39 and histidine 43. Residues 54–57 (YGNS) are Extracellular-facing. The chain crosses the membrane as a helical span at residues 58 to 84 (LLLTAVYGLVVAGSVLVLGAIIGDWVD). Residues 85–87 (KNA) are Cytoplasmic-facing. A helical transmembrane segment spans residues 88-118 (RLKVAQTSLVVQNVSVILCGIILMMVFLHKH). Residues 119-126 (ELLTMYHG) lie on the Extracellular side of the membrane. A helical transmembrane segment spans residues 127–162 (WVLTSCYILIITIANIANLASTATAITIQRDWIVVV). Topologically, residues 163–164 (AG) are cytoplasmic. Residues 165 to 195 (EDRSKLANMNATIRRIDQLTNILAPMAVGQI) traverse the membrane as a helical segment. The Extracellular segment spans residues 196-202 (MTFGSPV). A helical transmembrane segment spans residues 203 to 229 (IGCGFISGWNLVSMCVEYVLLWKVYQK). The Cytoplasmic segment spans residues 230-306 (TPALAVKAGL…DGWVSYYNQP (77 aa)). The chain crosses the membrane as a helical span at residues 307-333 (VFLAGMGLAFLYMTVLGFDCITTGYAY). Position 326 (cysteine 326) interacts with Fe cation. The Extracellular portion of the chain corresponds to 334 to 338 (TQGLS). A helical transmembrane segment spans residues 339–366 (GSILSILMGASAITGIMGTVAFTWLRRK). Residues 367–368 (CG) lie on the Cytoplasmic side of the membrane. The chain crosses the membrane as a helical span at residues 369-391 (LVRTGLISGLAQLSCLILCVISV). The Extracellular segment spans residues 392 to 453 (FMPGSPLDLS…ETSPESVPII (62 aa)). Asparagine 434 carries an N-linked (GlcNAc...) asparagine glycan. A helical transmembrane segment spans residues 454-483 (SVSLLFAGVIAARIGLWSFDLTVTQLLQEN). Residues 484–488 (VIESE) lie on the Cytoplasmic side of the membrane. Residues 489–513 (RGIINGVQNSMNYLLDLLHFIMVIL) traverse the membrane as a helical segment. Histidine 507 lines the Fe cation pocket. Residues 514–516 (APN) are Extracellular-facing. The helical transmembrane segment at 517–542 (PEAFGLLVLISVSFVAMGHIMYFRFA) threads the bilayer. At 543–571 (QNTLGNKLFACGPDAKEVRKENQANTSVV) the chain is on the cytoplasmic side.

The protein belongs to the ferroportin (FP) (TC 2.A.100) family. SLC40A subfamily. As to quaternary structure, identified in a complex with STOM. Interacts with HAMP; affinity of the peptide hormone HAMP for SLC40A1 increases by 80-fold in the presence of iron and the interaction promotes SLC40A1 ubiquitination and degradation. Part of a complex composed of SLC40A1/ferroportin, TF/transferrin and HEPH/hephaestin that transfers iron from cells to transferrin. Polyubiquitinated by RNF217; leading to proteasomal degradation. Under conditions of high systemic iron levels, both the hormone peptide hepcidin/HAMP and holo(iron bound)-transferrin/TF induce the ubiquitination, internalization and proteasomal degradation of SLC40A1 to control iron release from cells. In terms of tissue distribution, detected in erythrocytes (at protein level). Expressed in placenta, intestine, muscle and spleen. Highly expressed in mature red blood.

It is found in the cell membrane. The protein resides in the basolateral cell membrane. The enzyme catalyses Fe(2+)(in) = Fe(2+)(out). Transports Fe(2+) from the inside of a cell to the outside of the cell, playing a key role for maintaining systemic iron homeostasis. Transports iron from intestinal, splenic, hepatic cells, macrophages and erythrocytes into the blood to provide iron to other tissues. Controls therefore dietary iron uptake, iron recycling by macrophages and erythrocytes, and release of iron stores in hepatocytes. When iron is in excess in serum, circulating HAMP/hepcidin levels increase resulting in a degradation of SLC40A1, thus limiting the iron efflux to plasma. In Homo sapiens (Human), this protein is Ferroportin.